The primary structure comprises 460 residues: Bifunctional protein GlmU (460 aa).

Residues Met-1 to Pro-233 are pyrophosphorylase. Residues Lys-21, Gln-76, and Gly-81–Thr-82 contribute to the UDP-N-acetyl-alpha-D-glucosamine site. Asp-105 is a Mg(2+) binding site. Residues Gly-140, Glu-158, and Asn-231 each contribute to the UDP-N-acetyl-alpha-D-glucosamine site. Asn-231 is a Mg(2+) binding site. Residues Leu-234–Ala-254 are linker. The tract at residues Gly-255–Arg-460 is N-acetyltransferase. 2 residues coordinate UDP-N-acetyl-alpha-D-glucosamine: Arg-337 and Lys-355. Residue His-367 is the Proton acceptor of the active site. UDP-N-acetyl-alpha-D-glucosamine-binding residues include Tyr-370 and Asn-381. Residues Ala-384, Asn-390–Tyr-391, Ser-409, Gly-427, and Arg-444 each bind acetyl-CoA.

The protein in the N-terminal section; belongs to the N-acetylglucosamine-1-phosphate uridyltransferase family. In the C-terminal section; belongs to the transferase hexapeptide repeat family. Homotrimer. Mg(2+) is required as a cofactor.

The protein localises to the cytoplasm. The enzyme catalyses alpha-D-glucosamine 1-phosphate + acetyl-CoA = N-acetyl-alpha-D-glucosamine 1-phosphate + CoA + H(+). It carries out the reaction N-acetyl-alpha-D-glucosamine 1-phosphate + UTP + H(+) = UDP-N-acetyl-alpha-D-glucosamine + diphosphate. Its pathway is nucleotide-sugar biosynthesis; UDP-N-acetyl-alpha-D-glucosamine biosynthesis; N-acetyl-alpha-D-glucosamine 1-phosphate from alpha-D-glucosamine 6-phosphate (route II): step 2/2. The protein operates within nucleotide-sugar biosynthesis; UDP-N-acetyl-alpha-D-glucosamine biosynthesis; UDP-N-acetyl-alpha-D-glucosamine from N-acetyl-alpha-D-glucosamine 1-phosphate: step 1/1. It functions in the pathway bacterial outer membrane biogenesis; LPS lipid A biosynthesis. Catalyzes the last two sequential reactions in the de novo biosynthetic pathway for UDP-N-acetylglucosamine (UDP-GlcNAc). The C-terminal domain catalyzes the transfer of acetyl group from acetyl coenzyme A to glucosamine-1-phosphate (GlcN-1-P) to produce N-acetylglucosamine-1-phosphate (GlcNAc-1-P), which is converted into UDP-GlcNAc by the transfer of uridine 5-monophosphate (from uridine 5-triphosphate), a reaction catalyzed by the N-terminal domain. This chain is Bifunctional protein GlmU, found in Methylibium petroleiphilum (strain ATCC BAA-1232 / LMG 22953 / PM1).